The chain runs to 350 residues: GTPase Obg (350 aa).

Residues 1 to 159 (MKLVDEAEIL…RLLKLELRLL (159 aa)) enclose the Obg domain. Residues 127 to 146 (NMHFKSSVNRAPRQSTTGEE) form a disordered region. Residues 130–143 (FKSSVNRAPRQSTT) are compositionally biased toward polar residues. Residues 160 to 337 (ADVGLLGFPN…IMKDVMAFFD (178 aa)) enclose the OBG-type G domain. GTP contacts are provided by residues 166-173 (GFPNAGKS), 191-195 (FTTLY), 213-216 (DVPG), 287-290 (NKAD), and 318-320 (SAL). Positions 173 and 193 each coordinate Mg(2+).

Belongs to the TRAFAC class OBG-HflX-like GTPase superfamily. OBG GTPase family. As to quaternary structure, monomer. It depends on Mg(2+) as a cofactor.

Its subcellular location is the cytoplasm. Functionally, an essential GTPase which binds GTP, GDP and possibly (p)ppGpp with moderate affinity, with high nucleotide exchange rates and a fairly low GTP hydrolysis rate. Plays a role in control of the cell cycle, stress response, ribosome biogenesis and in those bacteria that undergo differentiation, in morphogenesis control. The protein is GTPase Obg of Xanthomonas oryzae pv. oryzae (strain MAFF 311018).